Consider the following 263-residue polypeptide: Phosphatidylserine decarboxylase proenzyme (263 aa).

Active-site charge relay system; for autoendoproteolytic cleavage activity residues include D90, H146, and S230. S230 serves as the catalytic Schiff-base intermediate with substrate; via pyruvic acid; for decarboxylase activity. A Pyruvic acid (Ser); by autocatalysis modification is found at S230.

This sequence belongs to the phosphatidylserine decarboxylase family. PSD-B subfamily. Prokaryotic type I sub-subfamily. In terms of assembly, heterodimer of a large membrane-associated beta subunit and a small pyruvoyl-containing alpha subunit. Requires pyruvate as cofactor. Is synthesized initially as an inactive proenzyme. Formation of the active enzyme involves a self-maturation process in which the active site pyruvoyl group is generated from an internal serine residue via an autocatalytic post-translational modification. Two non-identical subunits are generated from the proenzyme in this reaction, and the pyruvate is formed at the N-terminus of the alpha chain, which is derived from the carboxyl end of the proenzyme. The autoendoproteolytic cleavage occurs by a canonical serine protease mechanism, in which the side chain hydroxyl group of the serine supplies its oxygen atom to form the C-terminus of the beta chain, while the remainder of the serine residue undergoes an oxidative deamination to produce ammonia and the pyruvoyl prosthetic group on the alpha chain. During this reaction, the Ser that is part of the protease active site of the proenzyme becomes the pyruvoyl prosthetic group, which constitutes an essential element of the active site of the mature decarboxylase.

The protein resides in the cell membrane. The catalysed reaction is a 1,2-diacyl-sn-glycero-3-phospho-L-serine + H(+) = a 1,2-diacyl-sn-glycero-3-phosphoethanolamine + CO2. It participates in phospholipid metabolism; phosphatidylethanolamine biosynthesis; phosphatidylethanolamine from CDP-diacylglycerol: step 2/2. Its function is as follows. Catalyzes the formation of phosphatidylethanolamine (PtdEtn) from phosphatidylserine (PtdSer). The protein is Phosphatidylserine decarboxylase proenzyme of Bacillus subtilis (strain 168).